A 276-amino-acid chain; its full sequence is Protein canopy homolog 3 (276 aa).

A signal peptide spans Met-1–Ala-16. Positions Asn-30 to Leu-269 constitute a Saposin B-type domain. 3 cysteine pairs are disulfide-bonded: Cys-32–Cys-190, Cys-35–Cys-178, and Cys-88–Cys-150. The stretch at Asn-137–Glu-162 forms a coiled coil. Positions Ala-206–Leu-276 are disordered. 2 stretches are compositionally biased toward basic residues: residues Lys-210–Gly-219 and Lys-228–Ser-239. The span at Lys-240–Glu-252 shows a compositional bias: basic and acidic residues.

Belongs to the canopy family.

It localises to the endoplasmic reticulum. Functionally, toll-like receptor (TLR)-specific co-chaperone for HSP90B1. Required for proper TLR folding and hence controls TLR exit from the endoplasmic reticulum. Consequently, required for immune responses. The sequence is that of Protein canopy homolog 3 (cnpy3) from Danio rerio (Zebrafish).